The primary structure comprises 155 residues: Pathogenesis-related protein STH-21 (155 aa).

The protein belongs to the BetVI family.

In Solanum tuberosum (Potato), this protein is Pathogenesis-related protein STH-21 (STH-21).